The primary structure comprises 120 residues: Large ribosomal subunit protein uL22 (120 aa).

The protein belongs to the universal ribosomal protein uL22 family. As to quaternary structure, part of the 50S ribosomal subunit.

In terms of biological role, this protein binds specifically to 23S rRNA; its binding is stimulated by other ribosomal proteins, e.g. L4, L17, and L20. It is important during the early stages of 50S assembly. It makes multiple contacts with different domains of the 23S rRNA in the assembled 50S subunit and ribosome. Its function is as follows. The globular domain of the protein is located near the polypeptide exit tunnel on the outside of the subunit, while an extended beta-hairpin is found that lines the wall of the exit tunnel in the center of the 70S ribosome. This is Large ribosomal subunit protein uL22 from Corynebacterium efficiens (strain DSM 44549 / YS-314 / AJ 12310 / JCM 11189 / NBRC 100395).